The primary structure comprises 315 residues: 2,3-dihydroxyphenylpropionate/2,3-dihydroxicinnamic acid 1,2-dioxygenase (315 aa).

The active-site Proton donor is the histidine 118. The active-site Proton acceptor is the histidine 182.

It belongs to the LigB/MhpB extradiol dioxygenase family. As to quaternary structure, homotetramer. It depends on Fe(2+) as a cofactor.

It carries out the reaction 3-(2,3-dihydroxyphenyl)propanoate + O2 = (2Z,4E)-2-hydroxy-6-oxonona-2,4-dienedioate + H(+). The catalysed reaction is (2E)-3-(2,3-dihydroxyphenyl)prop-2-enoate + O2 = (2Z,4E,7E)-2-hydroxy-6-oxonona-2,4,7-trienedioate + H(+). The protein operates within aromatic compound metabolism; 3-phenylpropanoate degradation. In terms of biological role, catalyzes the non-heme iron(II)-dependent oxidative cleavage of 2,3-dihydroxyphenylpropionic acid and 2,3-dihydroxicinnamic acid into 2-hydroxy-6-ketononadienedioate and 2-hydroxy-6-ketononatrienedioate, respectively. This chain is 2,3-dihydroxyphenylpropionate/2,3-dihydroxicinnamic acid 1,2-dioxygenase, found in Mycolicibacterium gilvum (strain PYR-GCK) (Mycobacterium gilvum (strain PYR-GCK)).